The following is a 416-amino-acid chain: Squalene synthase (416 aa).

The next 2 membrane-spanning stretches (helical) occupy residues 285-304 and 386-406; these read VINFCAIPQVMAIGTLNACY and FISYDWMAVTSLAVSSAFLIA.

This sequence belongs to the phytoene/squalene synthase family. Requires Mg(2+) as cofactor.

The protein localises to the endoplasmic reticulum membrane. It carries out the reaction 2 (2E,6E)-farnesyl diphosphate + NADPH + H(+) = squalene + 2 diphosphate + NADP(+). The catalysed reaction is 2 (2E,6E)-farnesyl diphosphate + NADH + H(+) = squalene + 2 diphosphate + NAD(+). It functions in the pathway terpene metabolism; lanosterol biosynthesis; lanosterol from farnesyl diphosphate: step 1/3. This Dictyostelium discoideum (Social amoeba) protein is Squalene synthase (fdfT).